The sequence spans 491 residues: Serine/threonine-protein phosphatase 2A regulatory subunit B'' subunit delta (491 aa).

An EF-hand domain is found at threonine 331–arginine 366. Ca(2+)-binding residues include aspartate 344, aspartate 346, aspartate 348, and glutamate 355. Acidic residues-rich tracts occupy residues alanine 460–aspartate 473 and alanine 481–leucine 491. Positions alanine 460–leucine 491 are disordered.

As to quaternary structure, PP2A consists of a common heterodimeric core enzyme, composed of a 36 kDa catalytic subunit (subunit C) and a 65 kDa constant regulatory subunit (PR65 or subunit A), that associates with a variety of regulatory subunits. Proteins that associate with the core dimer include three families of regulatory subunits B (the R2/B/PR55/B55, R3/B''/PR72/PR130/PR59 and R5/B'/B56 families), the 48 kDa variable regulatory subunit, viral proteins, and cell signaling molecules. Expressed in testis, kidney, liver, lung, spleen, brain and heart.

The B regulatory subunit might modulate substrate selectivity and catalytic activity, and might also direct the localization of the catalytic enzyme to a particular subcellular compartment. Interacts with retinoblastoma-related protein p107 (in vivo). May target PP2A core dimer to p107 resulting in dephosphorylation of p107. This Mus musculus (Mouse) protein is Serine/threonine-protein phosphatase 2A regulatory subunit B'' subunit delta (Ppp2r3d).